Here is a 425-residue protein sequence, read N- to C-terminus: Endoplasmic reticulum junction formation protein lunapark (425 aa).

A lipid anchor (N-myristoyl glycine) is attached at Gly-2. The Cytoplasmic segment spans residues 2–45 (GGLFSRWRAKPSTVEVLENIDKEIQALEEFREKNQRLQKLWVGR). Residues 15–41 (VEVLENIDKEIQALEEFREKNQRLQKL) are a coiled coil. Residues 46–66 (LIIYSSILYLFTCLIVYLWYL) form a helical membrane-spanning segment. The Lumenal portion of the chain corresponds to 67–77 (PDEFTARLVMT). The helical transmembrane segment at 78-98 (LPFFAFPLIIWTLRTVLIFFF) threads the bilayer. Residues 99–425 (SKRTERNNEA…EPSEESLVTK (327 aa)) lie on the Cytoplasmic side of the membrane. The stretch at 101-128 (RTERNNEALDDLKSQKKKILEEVMEKET) forms a coiled coil. 5 positions are modified to phosphoserine: Ser-114, Ser-153, Ser-177, Ser-182, and Ser-194. The interval 144-242 (KKAKEFEPPS…HPPGPPLARP (99 aa)) is disordered. A compositionally biased stretch (pro residues) spans 186 to 195 (GPPPQGPVSP). At Thr-211 the chain carries Phosphothreonine. The residue at position 222 (Ser-222) is a Phosphoserine. A C4-type; plays a role in ER morphology zinc finger spans residues 271-296 (CQQCFSHNGMALKEEFEYIAFRCAYC). Phosphoserine is present on residues Ser-316, Ser-348, and Ser-380. The disordered stretch occupies residues 320-425 (RQAVEGSSST…EPSEESLVTK (106 aa)). A compositionally biased stretch (acidic residues) spans 384 to 398 (EPAENQEETENEETS). Ser-411 is modified (phosphoserine).

Belongs to the lunapark family. Homodimer; homodimerization requires the C4-type zinc finger motif and decreases during mitosis in a phosphorylation-dependent manner. In terms of processing, myristoylated; myristoylation is necessary for the endoplasmic reticulum (ER) three-way ER tubular junction formation, but is not required neither for membrane translocation, membrane topology formation, nor for the specific localization to ER membranes. Post-translationally, phosphorylated. Phosphorylation occurs at Ser-177, Ser-182, Ser-222, Ser-316 and Ser-380 during interphase. Phosphorylation occurs at Ser-114, Ser-153, Ser-194, Thr-211 and Ser-348 during mitosis; these phosphorylations reduce both its homodimerization and the ER three-way tubular junction formation. Subject to proteasomal degradation following phosphorylation during mitosis. In terms of tissue distribution, expressed in most tissues at basal level, with reinforcement in distal limb buds, genital bud, and in parts of the central nervous system.

It localises to the endoplasmic reticulum membrane. Functionally, endoplasmic reticulum (ER)-shaping membrane protein that plays a role in determining ER morphology. Involved in the stabilization of nascent three-way ER tubular junctions within the ER network. May also play a role as a curvature-stabilizing protein within three-way ER tubular junction network. May be involved in limb and central nervous system development. This chain is Endoplasmic reticulum junction formation protein lunapark, found in Mus musculus (Mouse).